The following is a 325-amino-acid chain: Delta(1)-pyrroline-2-carboxylate reductase (325 aa).

The protein belongs to the ornithine cyclodeaminase/mu-crystallin family.

It catalyses the reaction L-proline + NAD(+) = 1-pyrroline-2-carboxylate + NADH + H(+). The catalysed reaction is L-proline + NADP(+) = 1-pyrroline-2-carboxylate + NADPH + H(+). In terms of biological role, catalyzes the reduction of Delta(1)-pyrroline-2-carboxylate (Pyr2C) to L-proline, using preferentially NADPH over NADH as the electron donor. Is likely involved in a degradation pathway that converts trans-3-hydroxy-L-proline (t3LHyp) to L-proline, which allows B.cereus to grow on t3LHyp as a sole carbon source. In Bacillus cereus (strain ATCC 14579 / DSM 31 / CCUG 7414 / JCM 2152 / NBRC 15305 / NCIMB 9373 / NCTC 2599 / NRRL B-3711), this protein is Delta(1)-pyrroline-2-carboxylate reductase.